A 151-amino-acid chain; its full sequence is Large ribosomal subunit protein bL9 (151 aa).

This sequence belongs to the bacterial ribosomal protein bL9 family.

In terms of biological role, binds to the 23S rRNA. The chain is Large ribosomal subunit protein bL9 from Dehalococcoides mccartyi (strain ATCC BAA-2100 / JCM 16839 / KCTC 5957 / BAV1).